The sequence spans 161 residues: Small ribosomal subunit protein uS9 (161 aa).

Belongs to the universal ribosomal protein uS9 family.

The chain is Small ribosomal subunit protein uS9 from Bartonella henselae (strain ATCC 49882 / DSM 28221 / CCUG 30454 / Houston 1) (Rochalimaea henselae).